The chain runs to 462 residues: Chitinase-like mite allergen Der p 18.0101 (462 aa).

The signal sequence occupies residues 1 to 25 (MTRLSFTVLIFLAAYFGSNIRPNVA). Residues 29-378 (PKTVCYYESW…HAINSNYFRG (350 aa)) form the GH18 domain. Cys33 and Cys58 are disulfide-bonded. 2 N-linked (GlcNAc...) asparagine glycosylation sites follow: Asn338 and Asn441. Positions 404–462 (VFHCHQEGFFRDKTYCAKYYECKKGDFGLEQTVHHCPNHSQAFDEVSRTCVDHAKIPGC) constitute a Chitin-binding type-2 domain. Residues Cys439 and Cys453 are joined by a disulfide bond.

This sequence belongs to the glycosyl hydrolase 18 family. Chitinase class II subfamily. In terms of tissue distribution, expressed in the peritrophic matrix of the midgut, and only very weakly in fecal pellets.

The protein localises to the secreted. Its function is as follows. Probably a non-catalytic chitinase-like protein, which binds to insoluble chitin and enhances the activity of the catalytic chitinases. Has weak chitin-binding activity. The chain is Chitinase-like mite allergen Der p 18.0101 from Dermatophagoides pteronyssinus (European house dust mite).